Consider the following 663-residue polypeptide: DNA ligase 1 (663 aa).

NAD(+) contacts are provided by residues 28-32 and 76-77; these read DKEYD and SL. Lys-118 functions as the N6-AMP-lysine intermediate in the catalytic mechanism. NAD(+) contacts are provided by Arg-139, Glu-173, and Lys-310. Residues Cys-403, Cys-406, Cys-419, and Cys-425 each coordinate Zn(2+). Residues 583-663 form the BRCT domain; it reads VSESVFNDKT…KFEELIESVK (81 aa).

This sequence belongs to the NAD-dependent DNA ligase family. LigA subfamily. Requires Mg(2+) as cofactor. It depends on Mn(2+) as a cofactor.

The enzyme catalyses NAD(+) + (deoxyribonucleotide)n-3'-hydroxyl + 5'-phospho-(deoxyribonucleotide)m = (deoxyribonucleotide)n+m + AMP + beta-nicotinamide D-nucleotide.. DNA ligase that catalyzes the formation of phosphodiester linkages between 5'-phosphoryl and 3'-hydroxyl groups in double-stranded DNA using NAD as a coenzyme and as the energy source for the reaction. It is essential for DNA replication and repair of damaged DNA. The protein is DNA ligase 1 of Clostridium acetobutylicum (strain ATCC 824 / DSM 792 / JCM 1419 / IAM 19013 / LMG 5710 / NBRC 13948 / NRRL B-527 / VKM B-1787 / 2291 / W).